A 659-amino-acid polypeptide reads, in one-letter code: Anoctamin-10 (659 aa).

At Met1–Thr207 the chain is on the cytoplasmic side. Residues Ile208 to Ile228 form a helical membrane-spanning segment. At Gly229 to Tyr240 the chain is on the extracellular side. A helical membrane pass occupies residues Asp241–Trp261. Over Lys262 to Leu316 the chain is Cytoplasmic. Residues Val317–Phe337 form a helical membrane-spanning segment. The Extracellular segment spans residues Asp338–Ser352. The helical transmembrane segment at Glu353–Met373 threads the bilayer. Residues Asn374–Leu400 lie on the Cytoplasmic side of the membrane. A helical membrane pass occupies residues Val401 to Phe421. Residues Val422–Glu500 are Extracellular-facing. Residues Leu501–Phe521 form a helical membrane-spanning segment. Over Ala522–Gly553 the chain is Cytoplasmic. The helical transmembrane segment at Val554 to Ile574 threads the bilayer. Residues Gly575–Asp590 are Extracellular-facing. Residues Leu591 to Phe611 traverse the membrane as a helical segment. Residues Ala612 to Thr659 lie on the Cytoplasmic side of the membrane.

It belongs to the anoctamin family. As to expression, predominant expression seen in epithelial tissues.

It localises to the cell membrane. Does not exhibit calcium-activated chloride channel (CaCC) activity. Can inhibit the activity of ANO1. This chain is Anoctamin-10 (Ano10), found in Mus musculus (Mouse).